A 275-amino-acid polypeptide reads, in one-letter code: 2,3,4,5-tetrahydropyridine-2,6-dicarboxylate N-succinyltransferase (275 aa).

Positions 108 and 145 each coordinate substrate.

It belongs to the transferase hexapeptide repeat family. Homotrimer.

The protein resides in the cytoplasm. The catalysed reaction is (S)-2,3,4,5-tetrahydrodipicolinate + succinyl-CoA + H2O = (S)-2-succinylamino-6-oxoheptanedioate + CoA. It functions in the pathway amino-acid biosynthesis; L-lysine biosynthesis via DAP pathway; LL-2,6-diaminopimelate from (S)-tetrahydrodipicolinate (succinylase route): step 1/3. This Maricaulis maris (strain MCS10) (Caulobacter maris) protein is 2,3,4,5-tetrahydropyridine-2,6-dicarboxylate N-succinyltransferase.